We begin with the raw amino-acid sequence, 430 residues long: UDP-N-acetylmuramoylalanine--D-glutamate ligase (430 aa).

105-111 serves as a coordination point for ATP; the sequence is GSNGKTT.

Belongs to the MurCDEF family.

Its subcellular location is the cytoplasm. The catalysed reaction is UDP-N-acetyl-alpha-D-muramoyl-L-alanine + D-glutamate + ATP = UDP-N-acetyl-alpha-D-muramoyl-L-alanyl-D-glutamate + ADP + phosphate + H(+). The protein operates within cell wall biogenesis; peptidoglycan biosynthesis. Cell wall formation. Catalyzes the addition of glutamate to the nucleotide precursor UDP-N-acetylmuramoyl-L-alanine (UMA). The protein is UDP-N-acetylmuramoylalanine--D-glutamate ligase of Pseudothermotoga lettingae (strain ATCC BAA-301 / DSM 14385 / NBRC 107922 / TMO) (Thermotoga lettingae).